The primary structure comprises 616 residues: Putative L-type lectin-domain containing receptor kinase I.10 (616 aa).

An N-terminal signal peptide occupies residues 1 to 22 (MAWGLFQILMISFFHLIKLSSQ). Topologically, residues 23 to 288 (QETSFVYETF…RAEHKNLSPL (266 aa)) are extracellular. Positions 24–258 (ETSFVYETFR…YQYVLSWSFS (235 aa)) are legume-lectin like. 5 N-linked (GlcNAc...) asparagine glycosylation sites follow: Asn56, Asn124, Asn181, Asn204, and Asn225. A helical transmembrane segment spans residues 289 to 309 (FIDLLGFLAIMGLCTLTGMYF). The Cytoplasmic segment spans residues 310 to 616 (FKRGKYAEIT…SAASSATNSP (307 aa)). The Protein kinase domain occupies 343–616 (FHKDGFLGKG…SAASSATNSP (274 aa)). Residues 349–357 (LGKGGFGEV) and Lys371 contribute to the ATP site. Asp467 serves as the catalytic Proton acceptor.

It in the C-terminal section; belongs to the protein kinase superfamily. Ser/Thr protein kinase family. In the N-terminal section; belongs to the leguminous lectin family.

Its subcellular location is the cell membrane. It catalyses the reaction L-seryl-[protein] + ATP = O-phospho-L-seryl-[protein] + ADP + H(+). The catalysed reaction is L-threonyl-[protein] + ATP = O-phospho-L-threonyl-[protein] + ADP + H(+). This chain is Putative L-type lectin-domain containing receptor kinase I.10 (LECRK110), found in Arabidopsis thaliana (Mouse-ear cress).